The primary structure comprises 400 residues: Subtilisin-like protease 7 (400 aa).

The first 20 residues, 1–20 (MGFITKAIPLALAAASVING), serve as a signal peptide directing secretion. The propeptide occupies 21–119 (AEILETRAGV…IERDARVQIN (99 aa)). Residues 36–118 (KYIVVMNDGM…YIERDARVQI (83 aa)) form the Inhibitor I9 domain. The Peptidase S8 domain occupies 129-400 (SWGLARVGSK…GKLINNGSGK (272 aa)). Residues Asp-161 and His-192 each act as charge relay system in the active site. Asn-252 is a glycosylation site (N-linked (GlcNAc...) asparagine). Ser-346 acts as the Charge relay system in catalysis. An N-linked (GlcNAc...) asparagine glycan is attached at Asn-396.

This sequence belongs to the peptidase S8 family.

The protein resides in the secreted. Secreted subtilisin-like serine protease with keratinolytic activity that contributes to pathogenicity. The protein is Subtilisin-like protease 7 (SUB7) of Arthroderma gypseum (strain ATCC MYA-4604 / CBS 118893) (Microsporum gypseum).